A 318-amino-acid chain; its full sequence is UDP-3-O-acylglucosamine N-acyltransferase (318 aa).

His-231 (proton acceptor) is an active-site residue.

This sequence belongs to the transferase hexapeptide repeat family. LpxD subfamily. As to quaternary structure, homotrimer.

It carries out the reaction a UDP-3-O-[(3R)-3-hydroxyacyl]-alpha-D-glucosamine + a (3R)-hydroxyacyl-[ACP] = a UDP-2-N,3-O-bis[(3R)-3-hydroxyacyl]-alpha-D-glucosamine + holo-[ACP] + H(+). Its pathway is bacterial outer membrane biogenesis; LPS lipid A biosynthesis. In terms of biological role, catalyzes the N-acylation of UDP-3-O-acylglucosamine using 3-hydroxyacyl-ACP as the acyl donor. Is involved in the biosynthesis of lipid A, a phosphorylated glycolipid that anchors the lipopolysaccharide to the outer membrane of the cell. The chain is UDP-3-O-acylglucosamine N-acyltransferase from Campylobacter jejuni subsp. doylei (strain ATCC BAA-1458 / RM4099 / 269.97).